Reading from the N-terminus, the 344-residue chain is uncharacterized protein (344 aa).

The segment at 304–344 (AVPAPTPRRPLDSVLQIRQTPEKGRNASDRNARETGWFSPP) is disordered. Over residues 323-336 (TPEKGRNASDRNAR) the composition is skewed to basic and acidic residues.

This is an uncharacterized protein from Mycobacterium tuberculosis (strain CDC 1551 / Oshkosh).